Here is a 59-residue protein sequence, read N- to C-terminus: Protein translocase subunit SecE (59 aa).

The helical transmembrane segment at 30 to 50 (ITVITTVIFFAIFFALIDSGI) threads the bilayer.

This sequence belongs to the SecE/SEC61-gamma family. Component of the Sec protein translocase complex. Heterotrimer consisting of SecY, SecE and SecG subunits. The heterotrimers can form oligomers, although 1 heterotrimer is thought to be able to translocate proteins. Interacts with the ribosome. Interacts with SecDF, and other proteins may be involved. Interacts with SecA.

It localises to the cell membrane. Essential subunit of the Sec protein translocation channel SecYEG. Clamps together the 2 halves of SecY. May contact the channel plug during translocation. This is Protein translocase subunit SecE from Bacillus licheniformis.